A 1539-amino-acid chain; its full sequence is Lysine-specific demethylase 5D (1539 aa).

The 42-residue stretch at 14–55 (CPVFEPSWAEFQDPLGYIAKIRPIAEKSGICKIRPPADWQPP) folds into the JmjN domain. The region spanning 79–169 (TRVKLNYLDQ…IIYPYEMFQS (91 aa)) is the ARID domain. Positions 192–228 (PHSIPLRQSVQPSKFSSYSRRAKRLQPDPEPTEEDIE) are disordered. Over residues 197–210 (LRQSVQPSKFSSYS) the composition is skewed to polar residues. Residues Lys-205, Lys-229, Lys-244, and Lys-272 each participate in a glycyl lysine isopeptide (Lys-Gly) (interchain with G-Cter in SUMO2) cross-link. Phosphoserine occurs at positions 291 and 307. A PHD-type 1 zinc finger spans residues 316–362 (ICQVCSRGDEDDKLLFCDGCDDNYHIFCLLPPLPEIPRGIWRCPKCI). Tyr-430 contributes to the 2-oxoglutarate binding site. One can recognise a JmjC domain in the interval 458–624 (EYATSGWNLN…AGRQCIEHYR (167 aa)). The Fe cation site is built by His-504 and Glu-506. 2-oxoglutarate-binding residues include Ser-512, Asn-514, and Lys-522. His-592 contacts Fe cation. The C5HC2 zinc finger occupies 697 to 749 (CIKCKTTCFLSALACYDCPDGLVCLSHINDLCKCSSSRQYLRYRYTLDELPTM). Ser-884 bears the Phosphoserine mark. The segment at 1174-1235 (ICVCGQVPAG…DTKFLCPLCM (62 aa)) adopts a PHD-type 2 zinc-finger fold. Position 1346 is a phosphoserine (Ser-1346). Residues 1429-1521 (HQGSRTRSRA…QHKDSGSSAA (93 aa)) are disordered. Residues 1432–1446 (SRTRSRALERRRRRQ) are compositionally biased toward basic residues. Residues 1477–1491 (GREEEHYQEKADREN) are compositionally biased toward basic and acidic residues. A compositionally biased stretch (polar residues) spans 1494–1521 (LTPSTDHSPFLKGNQNSLQHKDSGSSAA).

Belongs to the JARID1 histone demethylase family. In terms of assembly, interacts with PCGF6, MSH5, ZMYND8, AR. L-ascorbate is required as a cofactor. It depends on Fe(2+) as a cofactor. As to expression, expression is highly down-regulated in metastatic prostate tumors.

The protein resides in the nucleus. It carries out the reaction N(6),N(6),N(6)-trimethyl-L-lysyl(4)-[histone H3] + 3 2-oxoglutarate + 3 O2 = L-lysyl(4)-[histone H3] + 3 formaldehyde + 3 succinate + 3 CO2. In terms of biological role, histone demethylase that specifically demethylates 'Lys-4' of histone H3, thereby playing a central role in histone code. Does not demethylate histone H3 'Lys-9', H3 'Lys-27', H3 'Lys-36', H3 'Lys-79' or H4 'Lys-20'. Demethylates trimethylated and dimethylated but not monomethylated H3 'Lys-4'. May play a role in spermatogenesis. Involved in transcriptional repression of diverse metastasis-associated genes; in this function seems to cooperate with ZMYND8. Suppresses prostate cancer cell invasion. Regulates androgen receptor (AR) transcriptional activity by demethylating H3K4me3 active transcription marks. In Homo sapiens (Human), this protein is Lysine-specific demethylase 5D (KDM5D).